A 199-amino-acid polypeptide reads, in one-letter code: MAMVASPDDIVKSPLPPPPPPPPPPLPPAHKDKAAYNPYSGCPAHGGDDGLDGIVLVLRAAAALLALVAMALVASCRHGDWMEFTRYQEYRYLLGVAVVASLYSALQAARTFRRMRAGTAYAATFLDFAGDQAVGYLLITASSAALPITIRMRSAVVNTFTDVVAASISFAFLAFAALAFSALIAGFRLSSSSSSAYNY.

The tract at residues 1–32 (MAMVASPDDIVKSPLPPPPPPPPPPLPPAHKD) is disordered. Residues 1–53 (MAMVASPDDIVKSPLPPPPPPPPPPLPPAHKDKAAYNPYSGCPAHGGDDGLDG) lie on the Cytoplasmic side of the membrane. Positions 14 to 28 (PLPPPPPPPPPPLPP) are enriched in pro residues. Residues 54–74 (IVLVLRAAAALLALVAMALVA) form a helical membrane-spanning segment. Residues 75–91 (SCRHGDWMEFTRYQEYR) lie on the Extracellular side of the membrane. A helical membrane pass occupies residues 92 to 112 (YLLGVAVVASLYSALQAARTF). Residues 113–127 (RRMRAGTAYAATFLD) lie on the Cytoplasmic side of the membrane. The chain crosses the membrane as a helical span at residues 128–148 (FAGDQAVGYLLITASSAALPI). Residues 149-163 (TIRMRSAVVNTFTDV) lie on the Extracellular side of the membrane. The helical transmembrane segment at 164–184 (VAASISFAFLAFAALAFSALI) threads the bilayer. Over 185 to 199 (AGFRLSSSSSSAYNY) the chain is Cytoplasmic.

This sequence belongs to the Casparian strip membrane proteins (CASP) family. Homodimer and heterodimers.

Its subcellular location is the cell membrane. This chain is CASP-like protein 4B1, found in Oryza sativa subsp. japonica (Rice).